A 299-amino-acid polypeptide reads, in one-letter code: SET domain-containing protein 9 (299 aa).

In terms of domain architecture, SET spans 122-295 (FSVAQATSSL…QGEELFSNYY (174 aa)). Tyr-294 lines the S-adenosyl-L-methionine pocket.

Belongs to the class V-like SAM-binding methyltransferase superfamily.

This chain is SET domain-containing protein 9 (SETD9), found in Homo sapiens (Human).